The following is a 501-amino-acid chain: L-arabinose isomerase (501 aa).

Mn(2+)-binding residues include glutamate 306, glutamate 333, histidine 350, and histidine 449.

The protein belongs to the arabinose isomerase family. Mn(2+) serves as cofactor.

The enzyme catalyses beta-L-arabinopyranose = L-ribulose. It participates in carbohydrate degradation; L-arabinose degradation via L-ribulose; D-xylulose 5-phosphate from L-arabinose (bacterial route): step 1/3. In terms of biological role, catalyzes the conversion of L-arabinose to L-ribulose. The chain is L-arabinose isomerase from Mycolicibacterium smegmatis (strain ATCC 700084 / mc(2)155) (Mycobacterium smegmatis).